Reading from the N-terminus, the 90-residue chain is MNDDEDRAQLKARLWIRVEERLQQVLSSEDIKYTPRFINSLLELAYLQLGEMGSDLQAFARHAGRGVVNKSDLMLYLRKQPDLQERVTQE.

Belongs to the TAF9 family. CENP-S/MHF1 subfamily. The MHF histone-fold complex is a heterotetramer of 2 MHF1-MHF2 heterodimers. Together with MPH1/FANCM, forms the FANCM-MHF complex. Component of the inner kinetochore constitutive centromere-associated network (CCAN) (also known as central kinetochore CTF19 complex in yeast), which is composed of at least AME1, CHL4, CNN1, CTF3, CTF19, IML3, MCM16, MCM21, MCM22, MHF1, MHF2, MIF2, NKP1, NKP2, OKP1 and WIP1.

In terms of biological role, dsDNA-binding component of a FANCM-MHF complex involved in DNA damage repair and genome maintenance. FANCM-MHF promotes gene conversion at blocked replication forks, probably by reversal of the stalled fork. Component of the kinetochore, a multiprotein complex that assembles on centromeric DNA and attaches chromosomes to spindle microtubules, mediating chromosome segregation and sister chromatid segregation during meiosis and mitosis. Component of the inner kinetochore constitutive centromere-associated network (CCAN), which serves as a structural platform for outer kinetochore assembly. This chain is Inner kinetochore subunit MHF1, found in Saccharomyces cerevisiae (strain ATCC 204508 / S288c) (Baker's yeast).